Reading from the N-terminus, the 300-residue chain is Small ribosomal subunit biogenesis GTPase RsgA (300 aa).

Residues 69–231 (RSDEMRVKQF…LIDSPGFQAF (163 aa)) form the CP-type G domain. Residues 119–122 (NKID) and 172–180 (GQSGMGKST) contribute to the GTP site. Positions 255, 260, 262, and 268 each coordinate Zn(2+).

The protein belongs to the TRAFAC class YlqF/YawG GTPase family. RsgA subfamily. Monomer. Associates with 30S ribosomal subunit, binds 16S rRNA. The cofactor is Zn(2+).

Its subcellular location is the cytoplasm. Functionally, one of several proteins that assist in the late maturation steps of the functional core of the 30S ribosomal subunit. Helps release RbfA from mature subunits. May play a role in the assembly of ribosomal proteins into the subunit. Circularly permuted GTPase that catalyzes slow GTP hydrolysis, GTPase activity is stimulated by the 30S ribosomal subunit. This Bordetella bronchiseptica (strain ATCC BAA-588 / NCTC 13252 / RB50) (Alcaligenes bronchisepticus) protein is Small ribosomal subunit biogenesis GTPase RsgA.